The sequence spans 65 residues: uncharacterized protein (65 aa).

The segment at 1–30 (MPAASLESLLPPPPGKLPSPPLRPHGKFQR) is disordered. A compositionally biased stretch (pro residues) spans 10 to 23 (LPPPPGKLPSPPLR).

This is an uncharacterized protein from Homo sapiens (Human).